The sequence spans 398 residues: S-adenosylmethionine synthase (398 aa).

Residue His16 coordinates ATP. Asp18 is a Mg(2+) binding site. K(+) is bound at residue Glu51. 2 residues coordinate L-methionine: Glu64 and Gln108. Residues 108–118 form a flexible loop region; it reads QSADIAQGVDA. ATP-binding positions include 176–178, 242–243, Asp251, 257–258, Ala274, and Lys278; these read DSK, KF, and RK. Asp251 contributes to the L-methionine binding site. An L-methionine-binding site is contributed by Lys282.

This sequence belongs to the AdoMet synthase family. As to quaternary structure, homotetramer; dimer of dimers. Mg(2+) serves as cofactor. K(+) is required as a cofactor.

The protein localises to the cytoplasm. It carries out the reaction L-methionine + ATP + H2O = S-adenosyl-L-methionine + phosphate + diphosphate. Its pathway is amino-acid biosynthesis; S-adenosyl-L-methionine biosynthesis; S-adenosyl-L-methionine from L-methionine: step 1/1. Catalyzes the formation of S-adenosylmethionine (AdoMet) from methionine and ATP. The overall synthetic reaction is composed of two sequential steps, AdoMet formation and the subsequent tripolyphosphate hydrolysis which occurs prior to release of AdoMet from the enzyme. This is S-adenosylmethionine synthase from Rhodopseudomonas palustris (strain BisB5).